Reading from the N-terminus, the 335-residue chain is 2-acylglycerol O-acyltransferase 1 (335 aa).

2 helical membrane-spanning segments follow: residues 24–44 (WVFSFLLLAQCCIGIFLSLVL) and 47–67 (LWLILALYVLWLYLDWETPQA). N-linked (GlcNAc...) asparagine glycans are attached at residues Asn-77, Asn-125, and Asn-180.

This sequence belongs to the diacylglycerol acyltransferase family.

It is found in the endoplasmic reticulum membrane. It catalyses the reaction a 2-acylglycerol + an acyl-CoA = a 1,2-diacylglycerol + CoA. The enzyme catalyses a 2-acylglycerol + an acyl-CoA = a 1,2-diacyl-sn-glycerol + CoA. It carries out the reaction a 2-acylglycerol + an acyl-CoA = a 2,3-diacyl-sn-glycerol + CoA. The catalysed reaction is a 1-acylglycerol + an acyl-CoA = a 1,2-diacylglycerol + CoA. It catalyses the reaction a 1-acylglycerol + an acyl-CoA = a 1,3-diacylglycerol + CoA. The enzyme catalyses a 1-acyl-sn-glycerol + an acyl-CoA = a 1,3-diacyl-sn-glycerol + CoA. It carries out the reaction a 3-acyl-sn-glycerol + an acyl-CoA = a 1,3-diacyl-sn-glycerol + CoA. The protein operates within glycerolipid metabolism; triacylglycerol biosynthesis. Functionally, involved in glycerolipid synthesis and lipid metabolism. Catalyzes the formation of diacylglycerol, the precursor of triacylglycerol, by transferring the acyl chain of a fatty acyl-CoA to a monoacylglycerol, mainly at the sn-1 or sn-3 positions. It uses both sn-2-monoacylglycerol (2-acylglycerol) and sn-1-monoacylglycerol (1-acyl-sn-glycerol) equally well as substrates, and uses sn-3-monoacylglycerol (3-acyl-sn-glycerol) with lower efficiency. The protein is 2-acylglycerol O-acyltransferase 1 (mogat1) of Xenopus tropicalis (Western clawed frog).